Here is a 103-residue protein sequence, read N- to C-terminus: Histone H4 (103 aa).

Residues 1–14 (MSGRGKGGKGLGKG) show a composition bias toward gly residues. Positions 1 to 20 (MSGRGKGGKGLGKGGAKRHR) are disordered. Residues 17–21 (KRHRK) mediate DNA binding.

The protein belongs to the histone H4 family. In terms of assembly, the nucleosome is a histone octamer containing two molecules each of H2A, H2B, H3 and H4 assembled in one H3-H4 heterotetramer and two H2A-H2B heterodimers. The octamer wraps approximately 147 bp of DNA.

The protein localises to the nucleus. Its subcellular location is the chromosome. Core component of nucleosome. Nucleosomes wrap and compact DNA into chromatin, limiting DNA accessibility to the cellular machineries which require DNA as a template. Histones thereby play a central role in transcription regulation, DNA repair, DNA replication and chromosomal stability. DNA accessibility is regulated via a complex set of post-translational modifications of histones, also called histone code, and nucleosome remodeling. This chain is Histone H4 (H4-I), found in Volvox carteri (Green alga).